The primary structure comprises 317 residues: ATP synthase gamma chain (317 aa).

This sequence belongs to the ATPase gamma chain family. In terms of assembly, F-type ATPases have 2 components, CF(1) - the catalytic core - and CF(0) - the membrane proton channel. CF(1) has five subunits: alpha(3), beta(3), gamma(1), delta(1), epsilon(1). CF(0) has three main subunits: a, b and c.

It localises to the cellular thylakoid membrane. Produces ATP from ADP in the presence of a proton gradient across the membrane. The gamma chain is believed to be important in regulating ATPase activity and the flow of protons through the CF(0) complex. This is ATP synthase gamma chain from Acaryochloris marina (strain MBIC 11017).